Reading from the N-terminus, the 1001-residue chain is Non-canonical poly(A) RNA polymerase protein Trf4-1 (1001 aa).

Low complexity-rich tracts occupy residues 44–86 (TING…NNSS) and 127–163 (RNST…STNG). 2 disordered regions span residues 44 to 92 (TING…PYLS) and 115 to 238 (QQQQ…AGGA). The segment covering 164-178 (PGAGTGTSTGAGGTG) has biased composition (gly residues). The span at 179-216 (TNSPATTASSTAATTTGPATSMSDTSNNPPQSTTTPAS) shows a compositional bias: low complexity. Residues Asp328 and Asp330 each contribute to the Mn(2+) site. The PAP-associated domain maps to 458–517 (NLGVLLLEFFELYGRRFNYMKIGISIKNGGRYMPKDELQRDMVDGHRPSLLCIEDPLTPG). Disordered regions lie at residues 631–652 (PTAH…PGAH), 687–740 (QQQQ…AQEV), 767–963 (ASNS…LRGT), and 977–1001 (SSES…RDER). Positions 635–649 (GHSHAHSHSHGHAHP) are enriched in basic residues. Low complexity-rich tracts occupy residues 687–708 (QQQQ…NQSQ) and 768–788 (SNSW…TGSS). The segment covering 827–841 (VGTGSNRGGGDGSGG) has biased composition (gly residues). Polar residues predominate over residues 844–854 (YNQRNNHNSSG). A compositionally biased stretch (low complexity) spans 855-880 (YYHQQYYVPPPMQQQLSKSNSSSNYH). The segment covering 881–912 (QQHHHSHSHGNHSHRQQHHHQQQHHHQQRPQH) has biased composition (basic residues). 2 stretches are compositionally biased toward low complexity: residues 932 to 955 (SAGN…SNNS) and 977 to 992 (SSES…SSRS).

This sequence belongs to the DNA polymerase type-B-like family. It depends on Mn(2+) as a cofactor.

The protein resides in the cytoplasm. It catalyses the reaction RNA(n) + ATP = RNA(n)-3'-adenine ribonucleotide + diphosphate. In terms of biological role, involved in a post-transcriptional quality control mechanism limiting inappropriate expression of genetic information. Polyadenylation is required for the degradative activity of the exosome on several of its nuclear RNA substrates. Polyadenylates RNA processing and degradation intermediates of snRNAs and mRNAs. This is Non-canonical poly(A) RNA polymerase protein Trf4-1 from Drosophila melanogaster (Fruit fly).